Here is a 350-residue protein sequence, read N- to C-terminus: 26S proteasome non-ATPase regulatory subunit 8 (350 aa).

The tract at residues 1–24 (MFIKGRAPRAPPRERRRATRGGLR) is disordered. Ser-106 carries the phosphoserine modification. One can recognise a PCI domain in the interval 162 to 331 (PSFERYMAQL…QQKPEDTTIP (170 aa)). Lys-297 participates in a covalent cross-link: Glycyl lysine isopeptide (Lys-Gly) (interchain with G-Cter in SUMO2).

This sequence belongs to the proteasome subunit S14 family. As to quaternary structure, component of the 19S proteasome regulatory particle complex. The 26S proteasome consists of a 20S core particle (CP) and two 19S regulatory subunits (RP). The regulatory particle is made of a lid composed of 9 subunits including PSMD8, a base containing 6 ATPases and few additional components. Interacts with DDI2. Interacts with TASOR.

Its function is as follows. Component of the 26S proteasome, a multiprotein complex involved in the ATP-dependent degradation of ubiquitinated proteins. This complex plays a key role in the maintenance of protein homeostasis by removing misfolded or damaged proteins, which could impair cellular functions, and by removing proteins whose functions are no longer required. Therefore, the proteasome participates in numerous cellular processes, including cell cycle progression, apoptosis, or DNA damage repair. This is 26S proteasome non-ATPase regulatory subunit 8 (PSMD8) from Homo sapiens (Human).